A 344-amino-acid chain; its full sequence is Holliday junction branch migration complex subunit RuvB (344 aa).

Residues 1 to 182 (MRIELLNTPV…FGISNRFDYY (182 aa)) are large ATPase domain (RuvB-L). ATP contacts are provided by residues I21, R22, G63, K66, T67, T68, 129–131 (EDF), R172, Y182, and R219. Residue T67 coordinates Mg(2+). The tract at residues 183 to 253 (PPELLETILM…TAMKTLDSLE (71 aa)) is small ATPAse domain (RuvB-S). The head domain (RuvB-H) stretch occupies residues 256 to 344 (EEGLDEMDKK…GTLFDGQEHV (89 aa)). Residues R311 and R316 each coordinate DNA.

The protein belongs to the RuvB family. As to quaternary structure, homohexamer. Forms an RuvA(8)-RuvB(12)-Holliday junction (HJ) complex. HJ DNA is sandwiched between 2 RuvA tetramers; dsDNA enters through RuvA and exits via RuvB. An RuvB hexamer assembles on each DNA strand where it exits the tetramer. Each RuvB hexamer is contacted by two RuvA subunits (via domain III) on 2 adjacent RuvB subunits; this complex drives branch migration. In the full resolvosome a probable DNA-RuvA(4)-RuvB(12)-RuvC(2) complex forms which resolves the HJ.

It localises to the cytoplasm. The catalysed reaction is ATP + H2O = ADP + phosphate + H(+). In terms of biological role, the RuvA-RuvB-RuvC complex processes Holliday junction (HJ) DNA during genetic recombination and DNA repair, while the RuvA-RuvB complex plays an important role in the rescue of blocked DNA replication forks via replication fork reversal (RFR). RuvA specifically binds to HJ cruciform DNA, conferring on it an open structure. The RuvB hexamer acts as an ATP-dependent pump, pulling dsDNA into and through the RuvAB complex. RuvB forms 2 homohexamers on either side of HJ DNA bound by 1 or 2 RuvA tetramers; 4 subunits per hexamer contact DNA at a time. Coordinated motions by a converter formed by DNA-disengaged RuvB subunits stimulates ATP hydrolysis and nucleotide exchange. Immobilization of the converter enables RuvB to convert the ATP-contained energy into a lever motion, pulling 2 nucleotides of DNA out of the RuvA tetramer per ATP hydrolyzed, thus driving DNA branch migration. The RuvB motors rotate together with the DNA substrate, which together with the progressing nucleotide cycle form the mechanistic basis for DNA recombination by continuous HJ branch migration. Branch migration allows RuvC to scan DNA until it finds its consensus sequence, where it cleaves and resolves cruciform DNA. The chain is Holliday junction branch migration complex subunit RuvB from Chlorobium luteolum (strain DSM 273 / BCRC 81028 / 2530) (Pelodictyon luteolum).